The chain runs to 284 residues: Bifunctional protein FolD (284 aa).

Residues 165–167 (GRS) and serine 190 each bind NADP(+).

It belongs to the tetrahydrofolate dehydrogenase/cyclohydrolase family. As to quaternary structure, homodimer.

The catalysed reaction is (6R)-5,10-methylene-5,6,7,8-tetrahydrofolate + NADP(+) = (6R)-5,10-methenyltetrahydrofolate + NADPH. The enzyme catalyses (6R)-5,10-methenyltetrahydrofolate + H2O = (6R)-10-formyltetrahydrofolate + H(+). It functions in the pathway one-carbon metabolism; tetrahydrofolate interconversion. In terms of biological role, catalyzes the oxidation of 5,10-methylenetetrahydrofolate to 5,10-methenyltetrahydrofolate and then the hydrolysis of 5,10-methenyltetrahydrofolate to 10-formyltetrahydrofolate. This is Bifunctional protein FolD from Streptococcus agalactiae serotype Ia (strain ATCC 27591 / A909 / CDC SS700).